Reading from the N-terminus, the 156-residue chain is Cell division protein SepF (156 aa).

The segment covering 23–36 (SYEKEQTDMKKQQD) has biased composition (basic and acidic residues). Positions 23–49 (SYEKEQTDMKKQQDPPEQQDVTFPKAQ) are disordered.

Belongs to the SepF family. Homodimer. Interacts with FtsZ.

It localises to the cytoplasm. Its function is as follows. Cell division protein that is part of the divisome complex and is recruited early to the Z-ring. Probably stimulates Z-ring formation, perhaps through the cross-linking of FtsZ protofilaments. Its function overlaps with FtsA. In Bacillus anthracis (strain CDC 684 / NRRL 3495), this protein is Cell division protein SepF.